The sequence spans 61 residues: Large ribosomal subunit protein bL32 (61 aa).

It belongs to the bacterial ribosomal protein bL32 family.

This Phytoplasma mali (strain AT) protein is Large ribosomal subunit protein bL32.